A 164-amino-acid chain; its full sequence is Phosphopantetheine adenylyltransferase (164 aa).

A substrate-binding site is contributed by S9. Residues 9–10 and H17 each bind ATP; that span reads SF. Substrate-binding residues include K41, L73, and K87. ATP is bound by residues 88–90, E98, and 123–129; these read GLR and YSYISSS.

This sequence belongs to the bacterial CoaD family. In terms of assembly, homohexamer. Requires Mg(2+) as cofactor.

It is found in the cytoplasm. The enzyme catalyses (R)-4'-phosphopantetheine + ATP + H(+) = 3'-dephospho-CoA + diphosphate. It functions in the pathway cofactor biosynthesis; coenzyme A biosynthesis; CoA from (R)-pantothenate: step 4/5. Reversibly transfers an adenylyl group from ATP to 4'-phosphopantetheine, yielding dephospho-CoA (dPCoA) and pyrophosphate. The sequence is that of Phosphopantetheine adenylyltransferase from Clostridium perfringens (strain 13 / Type A).